The chain runs to 487 residues: NADH-quinone oxidoreductase subunit N (487 aa).

13 helical membrane passes run 18-38 (LVPE…DLFV), 44-64 (VWTH…LATG), 84-104 (VMKT…WTYL), 116-136 (VLVL…SLLM), 169-189 (FVLG…VYGA), 211-231 (LLTG…AAPF), 242-262 (APAP…FGMA), 277-297 (WHLL…LMAI), 305-325 (MLAY…AGGG), 333-353 (MFYA…IIAL), 377-397 (AGLV…LGFW), 410-430 (DMLW…YYYL), and 457-477 (VLGV…PIMV).

It belongs to the complex I subunit 2 family. NDH-1 is composed of 14 different subunits. Subunits NuoA, H, J, K, L, M, N constitute the membrane sector of the complex.

The protein resides in the cell inner membrane. The catalysed reaction is a quinone + NADH + 5 H(+)(in) = a quinol + NAD(+) + 4 H(+)(out). Functionally, NDH-1 shuttles electrons from NADH, via FMN and iron-sulfur (Fe-S) centers, to quinones in the respiratory chain. The immediate electron acceptor for the enzyme in this species is believed to be ubiquinone. Couples the redox reaction to proton translocation (for every two electrons transferred, four hydrogen ions are translocated across the cytoplasmic membrane), and thus conserves the redox energy in a proton gradient. In Xanthomonas euvesicatoria pv. vesicatoria (strain 85-10) (Xanthomonas campestris pv. vesicatoria), this protein is NADH-quinone oxidoreductase subunit N.